We begin with the raw amino-acid sequence, 461 residues long: Trigger factor (461 aa).

The PPIase FKBP-type domain maps to 166–245 (GDFANIDLTA…VNSVKAEELP (80 aa)).

The protein belongs to the FKBP-type PPIase family. Tig subfamily.

The protein resides in the cytoplasm. It carries out the reaction [protein]-peptidylproline (omega=180) = [protein]-peptidylproline (omega=0). Functionally, involved in protein export. Acts as a chaperone by maintaining the newly synthesized protein in an open conformation. Functions as a peptidyl-prolyl cis-trans isomerase. The polypeptide is Trigger factor (Bifidobacterium animalis subsp. lactis (strain AD011)).